We begin with the raw amino-acid sequence, 299 residues long: ATP synthase gamma chain (299 aa).

It belongs to the ATPase gamma chain family. As to quaternary structure, F-type ATPases have 2 components, CF(1) - the catalytic core - and CF(0) - the membrane proton channel. CF(1) has five subunits: alpha(3), beta(3), gamma(1), delta(1), epsilon(1). CF(0) has three main subunits: a, b and c.

Its subcellular location is the cell membrane. Produces ATP from ADP in the presence of a proton gradient across the membrane. The gamma chain is believed to be important in regulating ATPase activity and the flow of protons through the CF(0) complex. This chain is ATP synthase gamma chain, found in Clavibacter michiganensis subsp. michiganensis (strain NCPPB 382).